The sequence spans 500 residues: Chromosomal replication initiator protein DnaA (500 aa).

The interval 1 to 37 is disordered; it reads MSDTPFGDADHPRPAPIHPDAVLPPPMSSQSADNDPT. The domain I, interacts with DnaA modulators stretch occupies residues 1–103; sequence MSDTPFGDAD…EELLSDHFHK (103 aa). A compositionally biased stretch (pro residues) spans 14-27; that stretch reads PAPIHPDAVLPPPM. The tract at residues 103–161 is domain II; it reads KAIHLAITIDPDLELALGAPDHEDEEEEVPPAQFVPKVTVGVTEPSARPTTTIDDDEGN. The domain III, AAA+ region stretch occupies residues 162-378; the sequence is RLNPKYTFDS…GALIRVTAFA (217 aa). G206, G208, K209, and T210 together coordinate ATP. A domain IV, binds dsDNA region spans residues 379 to 500; the sequence is SLNQQPVDIS…SEITNRIKQY (122 aa).

It belongs to the DnaA family. Oligomerizes as a right-handed, spiral filament on DNA at oriC.

It localises to the cytoplasm. Functionally, plays an essential role in the initiation and regulation of chromosomal replication. ATP-DnaA binds to the origin of replication (oriC) to initiate formation of the DNA replication initiation complex once per cell cycle. Binds the DnaA box (a 9 base pair repeat at the origin) and separates the double-stranded (ds)DNA. Forms a right-handed helical filament on oriC DNA; dsDNA binds to the exterior of the filament while single-stranded (ss)DNA is stabiized in the filament's interior. The ATP-DnaA-oriC complex binds and stabilizes one strand of the AT-rich DNA unwinding element (DUE), permitting loading of DNA polymerase. After initiation quickly degrades to an ADP-DnaA complex that is not apt for DNA replication. Binds acidic phospholipids. The protein is Chromosomal replication initiator protein DnaA of Cutibacterium acnes (strain DSM 16379 / KPA171202) (Propionibacterium acnes).